The sequence spans 246 residues: MLVVLLTAALLALSSAQGTDEEVNNAETSDVPADSEQQPVDSGSDPPSADADAENVQEGESAAPANEEPPATSGSEEEQQQQEPTQAENQEPPATSGSEEEQQQQEPTQAENQEPPATSGSEEEQQQQEPTQAEDQQPPATSGSEEEQQQQESTQAENQEPSDSAGEGQETQPEEGNVESPPSSPENSQEQPQQTNPEEKPPAPKTQEEPQHDSGRPKKPLLPFIANLIRERIRKLLARSPLGRRF.

Residues 1–18 (MLVVLLTAALLALSSAQG) form the signal peptide. Positions 14-223 (SSAQGTDEEV…SGRPKKPLLP (210 aa)) are disordered. Low complexity-rich tracts occupy residues 39-50 (PVDSGSDPPSAD), 58-71 (EGES…EPPA), 81-93 (QQEP…QEPP), 104-116 (QQEP…QEPP), 127-141 (QQEP…PPAT), 150-159 (QQESTQAENQ), and 178-196 (VESP…QQTN). 5 repeat units span residues 67-89 (EEPP…QAEN), 90-112 (QEPP…QAEN), 113-135 (QEPP…QAED), 136-158 (QQPP…QAEN), and 159-181 (QEPS…VESP). The 5 X 23 AA tandem repeats stretch occupies residues 67–181 (EEPPATSGSE…QPEEGNVESP (115 aa)). The span at 197–216 (PEEKPPAPKTQEEPQHDSGR) shows a compositional bias: basic and acidic residues.

Submandibular gland acinar cells.

Its subcellular location is the secreted. GRP proteins have a marked affinity for hydroxyapatite. They may play a role in the formation of the protective acquired pellicle at the saliva-tooth interface. This is Submandibular gland secretory Glx-rich protein CA (Grpca) from Rattus norvegicus (Rat).